Consider the following 511-residue polypeptide: Limonoid UDP-glucosyltransferase (511 aa).

The active-site Proton acceptor is His19. His19 lines the an anthocyanidin pocket. UDP-alpha-D-glucose-binding residues include Gln344, His359, Trp362, Asn363, Ser364, and Glu367. Residue Gly382 participates in an anthocyanidin binding. 2 residues coordinate UDP-alpha-D-glucose: Asp383 and Gln384.

Belongs to the UDP-glycosyltransferase family.

The catalysed reaction is limonin + UDP-alpha-D-glucose + H2O = limonin 17-beta-D-glucoside + UDP + 2 H(+). Involved in the glucosylation of limonoids. In Citrus unshiu (Satsuma mandarin), this protein is Limonoid UDP-glucosyltransferase.